We begin with the raw amino-acid sequence, 434 residues long: GTPase Obg (434 aa).

Positions 4-162 constitute an Obg domain; the sequence is ADFIDRIVIY…RKLVLELKLL (159 aa). Residues 163–333 form the OBG-type G domain; the sequence is ADVGLVGYPN…IVYKLAEIVK (171 aa). GTP-binding positions include 169–176, 194–198, 215–218, 285–288, and 314–316; these read GYPNVGKS, FTTTI, DIPG, NKID, and SII. Mg(2+) is bound by residues serine 176 and threonine 196. Residues 355-434 enclose the OCT domain; that stretch reads LWKELPERFN…VAQRAFEYKE (80 aa).

It belongs to the TRAFAC class OBG-HflX-like GTPase superfamily. OBG GTPase family. Monomer. Mg(2+) serves as cofactor.

Its subcellular location is the cytoplasm. Functionally, an essential GTPase which binds GTP, GDP and possibly (p)ppGpp with moderate affinity, with high nucleotide exchange rates and a fairly low GTP hydrolysis rate. Plays a role in control of the cell cycle, stress response, ribosome biogenesis and in those bacteria that undergo differentiation, in morphogenesis control. The chain is GTPase Obg from Thermosipho africanus (strain TCF52B).